Consider the following 547-residue polypeptide: MLRHILTAKNLLSNPIFKFPNCLPFLSTVCCICRQFVGENLCSFADSPSLFEMWFHFLQLRSALNISSALRQVVHGTRWHAKRKSYKVLFWREITPLAVPIFMENACVLLMGVLSTFLVSWLGKDAMAGVGLADSFNMVIMAFFAAIDLGTTVVVAFSLGKRDRRRARVATRQSLVIMTLFAVLLATLIHHFGEQIIDFVAGDATTEVKALALTYLELTVLSYPAAAITLIGSGALRGAGNTKIPLLINGSLNILNIIISGILIYGLFSWPGLGFVGAGLGLTISRYIGAVAILWVLAIGFNPALRISLKSYFKPLNFSIIWEVMGIGIPASVESVLFTSGRLLTQMFVAGMGTSVIAGNFIAFSIAALINLPGSALGSASTIITGRRLGVGQIAQAEIQLRHVFWLSTLGLTAIAWLTAPFAGVMASFYTQDPQVKHVVVILIWLNALFMPIWSASWVLPAGFKGARDARYAMWVSMLSMWGCRVVVGYVLGIMLGWGVVGVWMGMFADWAVRAVLFYWRMVTGRWLWKYPRPEPQKCEKKPVVSE.

The next 11 helical transmembrane spans lie at 94–114 (ITPL…MGVL), 139–159 (VIMA…AFSL), 174–194 (SLVI…HFGE), 211–231 (LALT…ITLI), 246–268 (LLIN…YGLF), 281–301 (GLTI…AIGF), 318–338 (FSII…SVLF), 350–370 (AGMG…AALI), 404–424 (VFWL…PFAG), 439–459 (VVVI…ASWV), and 486–506 (VVVG…VWMG).

Belongs to the multi antimicrobial extrusion (MATE) (TC 2.A.66.1) family.

The protein localises to the cell inner membrane. In terms of biological role, a transporter able to export peptides and flavins. When overexpressed allows cells deleted for multiple peptidases (pepA, pepB, pepD and pepN) to grow in the presence of dipeptides Ala-Gln or Gly-Tyr which otherwise inhibit growth. Cells overexpressing this protein have decreased intracellular levels of Ala-Gln dipeptide, and in a system that produces the Ala-Gln dipeptide, overproduction of this protein increases its export. When overexpressed increases secretion of FMN and FAD but not riboflavin; intracellular concentrations of FMN and riboflavin rise, possibly to compensate for increased secretion. Increased overexpression causes slight cell elongation. This Escherichia coli (strain K12) protein is Probable FMN/FAD exporter YeeO (yeeO).